The chain runs to 213 residues: Large ribosomal subunit protein uL1 (213 aa).

Belongs to the universal ribosomal protein uL1 family. In terms of assembly, part of the 50S ribosomal subunit.

Binds directly to 23S rRNA. Probably involved in E site tRNA release. Its function is as follows. Protein L1 is also a translational repressor protein, it controls the translation of its operon by binding to its mRNA. In Methanocorpusculum labreanum (strain ATCC 43576 / DSM 4855 / Z), this protein is Large ribosomal subunit protein uL1.